Here is a 456-residue protein sequence, read N- to C-terminus: Arginine biosynthesis bifunctional protein ArgJ, mitochondrial (456 aa).

Substrate-binding residues include Thr184, Lys213, Thr224, Glu311, Asn451, and Thr456. The active-site Nucleophile is the Thr224.

This sequence belongs to the ArgJ family. In terms of assembly, heterodimer of an alpha and a beta chain. Post-translationally, the alpha and beta chains are autoproteolytically processed from a single precursor protein within the mitochondrion.

The protein resides in the mitochondrion matrix. It catalyses the reaction N(2)-acetyl-L-ornithine + L-glutamate = N-acetyl-L-glutamate + L-ornithine. The catalysed reaction is L-glutamate + acetyl-CoA = N-acetyl-L-glutamate + CoA + H(+). It participates in amino-acid biosynthesis; L-arginine biosynthesis; L-ornithine and N-acetyl-L-glutamate from L-glutamate and N(2)-acetyl-L-ornithine (cyclic): step 1/1. The protein operates within amino-acid biosynthesis; L-arginine biosynthesis; N(2)-acetyl-L-ornithine from L-glutamate: step 1/4. Its function is as follows. Catalyzes two activities which are involved in the cyclic version of arginine biosynthesis: the synthesis of acetylglutamate from glutamate and acetyl-CoA, and of ornithine by transacetylation between acetylornithine and glutamate. This is Arginine biosynthesis bifunctional protein ArgJ, mitochondrial from Neosartorya fischeri (strain ATCC 1020 / DSM 3700 / CBS 544.65 / FGSC A1164 / JCM 1740 / NRRL 181 / WB 181) (Aspergillus fischerianus).